The chain runs to 326 residues: Light-induced protein, chloroplastic (326 aa).

The transit peptide at 1–63 (MASISSLNQI…TNPKPKFTAQ (63 aa)) directs the protein to the chloroplast.

Belongs to the LIPC family. In terms of assembly, associates with the major light-harvesting antenna complex polypeptides of the PSII oxygen-evolving complex. As to expression, expressed at high levels in leaves and in the petals and anthers of flowers.

The protein localises to the plastid. It is found in the chloroplast thylakoid membrane. In terms of biological role, required for normal plant growth. May be both photoprotective and play an ancillary role in photosynthesis. May structurally stabilize thylakoids during osmotic and oxidative stress. The sequence is that of Light-induced protein, chloroplastic from Solanum demissum (Wild potato).